Reading from the N-terminus, the 719-residue chain is Probable 1-deoxy-D-xylulose-5-phosphate synthase, chloroplastic (719 aa).

The transit peptide at 1 to 57 (MALCAYAFPGILNRTVAVASDASKPTPLFSEWIHGTDLQFQFHQKLTQVKKRSRTVQ) directs the protein to the chloroplast. Thiamine diphosphate contacts are provided by residues histidine 145 and 186 to 188 (GHS). Position 217 (aspartate 217) interacts with Mg(2+). Thiamine diphosphate contacts are provided by residues 218–219 (GA), asparagine 246, tyrosine 367, and glutamate 449. Asparagine 246 contacts Mg(2+).

Belongs to the transketolase family. DXPS subfamily. Homodimer. Requires Mg(2+) as cofactor. Thiamine diphosphate is required as a cofactor.

The protein resides in the plastid. It is found in the chloroplast. It carries out the reaction D-glyceraldehyde 3-phosphate + pyruvate + H(+) = 1-deoxy-D-xylulose 5-phosphate + CO2. It participates in metabolic intermediate biosynthesis; 1-deoxy-D-xylulose 5-phosphate biosynthesis; 1-deoxy-D-xylulose 5-phosphate from D-glyceraldehyde 3-phosphate and pyruvate: step 1/1. In terms of biological role, catalyzes the acyloin condensation reaction between C atoms 2 and 3 of pyruvate and glyceraldehyde 3-phosphate to yield 1-deoxy-D-xylulose-5-phosphate (DXP). This chain is Probable 1-deoxy-D-xylulose-5-phosphate synthase, chloroplastic (TKT2), found in Capsicum annuum (Capsicum pepper).